The chain runs to 361 residues: POU domain, class 3, transcription factor 4 (361 aa).

2 disordered regions span residues 99–131 and 144–192; these read PHVA…GQPL and MLEH…PTSD. Residues 119 to 131 show a composition bias toward polar residues; the sequence is APNSSITNSGQPL. Residues 165-183 show a composition bias toward basic and acidic residues; that stretch reads VLREPPDHGELGSHHCQDH. In terms of domain architecture, POU-specific spans 186–260; it reads EETPTSDELE…LLNKWLEEAD (75 aa). Serine 265 is subject to Phosphoserine. Residues 278–337 constitute a DNA-binding region (homeobox); sequence KRKKRTSIEVSVKGVLETHFLKCPKPAAQEISSLADSLQLEKEVVRVWFCNRRQKEKRMT. Positions 334 to 361 are disordered; the sequence is KRMTPPGDQQPHEVYSHTVKTDASCHDL. Residues 343–361 are compositionally biased toward basic and acidic residues; that stretch reads QPHEVYSHTVKTDASCHDL.

This sequence belongs to the POU transcription factor family. Class-3 subfamily.

It localises to the nucleus. Functionally, probable transcription factor which exert its primary action widely during early neural development and in a very limited set of neurons in the mature brain. This is POU domain, class 3, transcription factor 4 (Pou3f4) from Mesocricetus auratus (Golden hamster).